We begin with the raw amino-acid sequence, 508 residues long: Carboxypeptidase Y homolog ARB_05721 (508 aa).

The first 25 residues, 1-25, serve as a signal peptide directing secretion; that stretch reads MELYLNMLSFWYILLATSFFGPSQA. 2 N-linked (GlcNAc...) asparagine glycosylation sites follow: Asn-132 and Asn-169. Residue Ser-204 is part of the active site. Asn-268 carries an N-linked (GlcNAc...) asparagine glycan. Cystine bridges form between Cys-282-Cys-305, Cys-289-Cys-298, and Cys-332-Cys-338. Asp-410 is a catalytic residue. Cys-413 lines the substrate pocket. Asn-451 is a glycosylation site (N-linked (GlcNAc...) asparagine). The active site involves His-484. Residue Met-485 coordinates substrate.

Belongs to the peptidase S10 family.

Its subcellular location is the secreted. The enzyme catalyses Release of a C-terminal amino acid with broad specificity.. Involved in degradation of small peptides. In Arthroderma benhamiae (strain ATCC MYA-4681 / CBS 112371) (Trichophyton mentagrophytes), this protein is Carboxypeptidase Y homolog ARB_05721.